We begin with the raw amino-acid sequence, 120 residues long: Ribonuclease P protein component (120 aa).

Belongs to the RnpA family. Consists of a catalytic RNA component (M1 or rnpB) and a protein subunit.

The enzyme catalyses Endonucleolytic cleavage of RNA, removing 5'-extranucleotides from tRNA precursor.. Functionally, RNaseP catalyzes the removal of the 5'-leader sequence from pre-tRNA to produce the mature 5'-terminus. It can also cleave other RNA substrates such as 4.5S RNA. The protein component plays an auxiliary but essential role in vivo by binding to the 5'-leader sequence and broadening the substrate specificity of the ribozyme. This is Ribonuclease P protein component from Acidothermus cellulolyticus (strain ATCC 43068 / DSM 8971 / 11B).